Consider the following 315-residue polypeptide: Three-prime repair exonuclease 1 (315 aa).

Residues Asp18 and Glu20 each coordinate Mg(2+). 20-21 is a binding site for substrate; that stretch reads EA. Ser78 bears the Phosphoserine mark. Tyr129 serves as a coordination point for substrate. Position 167 is a phosphoserine (Ser167). The active-site Proton donor/acceptor is the His195. Asp200 provides a ligand contact to Mg(2+). Asp200 lines the substrate pocket. A necessary for endoplasmic reticulum localization region spans residues 236–315; sequence TTSTGTNPRP…YGLSLAMPGQ (80 aa). An interaction with UBQLN1 region spans residues 243 to 315; sequence PRPSAVTATV…YGLSLAMPGQ (73 aa). Positions 256–282 are disordered; that stretch reads RASDTGPNLRGDRSPKPAPSPKMCPGA. A compositionally biased stretch (pro residues) spans 271 to 282; that stretch reads KPAPSPKMCPGA. Residues 282–315 are necessary for cytoplasmic retention; that stretch reads APPGEGLLAPLGLLAFLTLAVAMLYGLSLAMPGQ.

The protein belongs to the exonuclease superfamily. TREX family. In terms of assembly, homodimer. Interacts (via proline-rich region) with TCERG1/CA150 (via the second WW domain). Component of the SET complex, composed of at least ANP32A, APEX1, HMGB2, NME1, SET and TREX1. Within this complex, directly interacts with SET; this interaction does not result in TREX1 inhibition. Also interacts with NME1, but only following translocation to the nucleus. Directly interacts with UBQLN1 (via ubiquitin-like domain); the interaction may control TREX1 subcellular location. Mg(2+) serves as cofactor. Post-translationally, ubiquitinated, but not targeted to proteasomal degradation. Ubiquitination may be important for interaction with UBQLN1.

It localises to the nucleus. Its subcellular location is the cytoplasm. The protein localises to the cytosol. It is found in the endoplasmic reticulum membrane. It carries out the reaction Exonucleolytic cleavage in the 3'- to 5'-direction to yield nucleoside 5'-phosphates.. In terms of biological role, major cellular 3'-to-5' DNA exonuclease which digests single-stranded DNA (ssDNA) and double-stranded DNA (dsDNA) with mismatched 3' termini. Prevents cell-intrinsic initiation of autoimmunity. Acts by metabolizing DNA fragments from endogenous retroelements, including L1, LTR and SINE elements. Plays a key role in degradation of DNA fragments at cytosolic micronuclei arising from genome instability: its association with the endoplasmic reticulum membrane directs TREX1 to ruptured micronuclei, leading to micronuclear DNA degradation. Micronuclear DNA degradation is required to limit CGAS activation and subsequent inflammation. Unless degraded, these DNA fragments accumulate in the cytosol and activate the cGAS-STING innate immune signaling, leading to the production of type I interferon. Prevents chronic ATM-dependent checkpoint activation, by processing ssDNA polynucleotide species arising from the processing of aberrant DNA replication intermediates. Inefficiently degrades oxidized DNA, such as that generated upon antimicrobial reactive oxygen production or upon absorption of UV light. During GZMA-mediated cell death, contributes to DNA damage in concert with NME1. NME1 nicks one strand of DNA and TREX1 removes bases from the free 3' end to enhance DNA damage and prevent DNA end reannealing and rapid repair. In Bos taurus (Bovine), this protein is Three-prime repair exonuclease 1.